A 214-amino-acid polypeptide reads, in one-letter code: Thiamine-phosphate synthase (214 aa).

4-amino-2-methyl-5-(diphosphooxymethyl)pyrimidine-binding positions include 37–41 (QYREK) and Asn-73. Mg(2+) contacts are provided by Asp-74 and Asp-93. Ser-112 contacts 4-amino-2-methyl-5-(diphosphooxymethyl)pyrimidine. Residue 139-141 (TIS) participates in 2-[(2R,5Z)-2-carboxy-4-methylthiazol-5(2H)-ylidene]ethyl phosphate binding. Lys-142 contributes to the 4-amino-2-methyl-5-(diphosphooxymethyl)pyrimidine binding site. Residues Gly-171 and 191-192 (IS) each bind 2-[(2R,5Z)-2-carboxy-4-methylthiazol-5(2H)-ylidene]ethyl phosphate.

It belongs to the thiamine-phosphate synthase family. Mg(2+) serves as cofactor.

It carries out the reaction 2-[(2R,5Z)-2-carboxy-4-methylthiazol-5(2H)-ylidene]ethyl phosphate + 4-amino-2-methyl-5-(diphosphooxymethyl)pyrimidine + 2 H(+) = thiamine phosphate + CO2 + diphosphate. The enzyme catalyses 2-(2-carboxy-4-methylthiazol-5-yl)ethyl phosphate + 4-amino-2-methyl-5-(diphosphooxymethyl)pyrimidine + 2 H(+) = thiamine phosphate + CO2 + diphosphate. The catalysed reaction is 4-methyl-5-(2-phosphooxyethyl)-thiazole + 4-amino-2-methyl-5-(diphosphooxymethyl)pyrimidine + H(+) = thiamine phosphate + diphosphate. It participates in cofactor biosynthesis; thiamine diphosphate biosynthesis; thiamine phosphate from 4-amino-2-methyl-5-diphosphomethylpyrimidine and 4-methyl-5-(2-phosphoethyl)-thiazole: step 1/1. Functionally, condenses 4-methyl-5-(beta-hydroxyethyl)thiazole monophosphate (THZ-P) and 2-methyl-4-amino-5-hydroxymethyl pyrimidine pyrophosphate (HMP-PP) to form thiamine monophosphate (TMP). The sequence is that of Thiamine-phosphate synthase from Listeria monocytogenes serotype 4b (strain F2365).